Here is a 326-residue protein sequence, read N- to C-terminus: MGFLSPMHPCRPPTQRRMAAGNHSTVTEFILKGLTKRADLQLPLFLLFLGIYLVTIVGNLGMITLICLNSQLHTPMYYFLSNLSLMDLCYSSVITPKMLVNFVSEKNIISYAGCMSQLYFFLVFVIAECYMLTVMAYDRYVAICHPLLYNIIMSHHTCLLLVAVVYAIGLIGSTIETGLMLKLPYCEHLISHYFCDILPLMKLSCSSTYDVEMTVFFSAGFNIIVTSLTVLVSYTFILSSILGISTTEGRSKAFSTCSSHLAAVGMFYGSTAFMYLKPSTISSLTQENVASVFYTTVIPMLNPLIYSLRNKEVKAAVQKTLRGKLF.

Topologically, residues 1–45 are extracellular; sequence MGFLSPMHPCRPPTQRRMAAGNHSTVTEFILKGLTKRADLQLPLF. Asn-22 carries an N-linked (GlcNAc...) asparagine glycan. The helical transmembrane segment at 46–66 threads the bilayer; sequence LLFLGIYLVTIVGNLGMITLI. Residues 67–77 lie on the Cytoplasmic side of the membrane; the sequence is CLNSQLHTPMY. The chain crosses the membrane as a helical span at residues 78 to 100; the sequence is YFLSNLSLMDLCYSSVITPKMLV. At 101–116 the chain is on the extracellular side; that stretch reads NFVSEKNIISYAGCMS. The cysteines at positions 114 and 195 are disulfide-linked. A helical transmembrane segment spans residues 117–137; that stretch reads QLYFFLVFVIAECYMLTVMAY. Topologically, residues 138–150 are cytoplasmic; that stretch reads DRYVAICHPLLYN. The chain crosses the membrane as a helical span at residues 151–171; the sequence is IIMSHHTCLLLVAVVYAIGLI. Over 172-222 the chain is Extracellular; it reads GSTIETGLMLKLPYCEHLISHYFCDILPLMKLSCSSTYDVEMTVFFSAGFN. Residues 223–243 traverse the membrane as a helical segment; the sequence is IIVTSLTVLVSYTFILSSILG. Over 244–260 the chain is Cytoplasmic; it reads ISTTEGRSKAFSTCSSH. The chain crosses the membrane as a helical span at residues 261 to 281; it reads LAAVGMFYGSTAFMYLKPSTI. At 282–287 the chain is on the extracellular side; the sequence is SSLTQE. The chain crosses the membrane as a helical span at residues 288-308; it reads NVASVFYTTVIPMLNPLIYSL. Over 309–326 the chain is Cytoplasmic; that stretch reads RNKEVKAAVQKTLRGKLF.

The protein belongs to the G-protein coupled receptor 1 family.

It is found in the cell membrane. Its function is as follows. Odorant receptor. The protein is Olfactory receptor 8A1 (OR8A1) of Homo sapiens (Human).